The sequence spans 462 residues: L-seryl-tRNA(Sec) selenium transferase (462 aa).

K294 bears the N6-(pyridoxal phosphate)lysine mark.

This sequence belongs to the SelA family. In terms of assembly, homodecamer; pentamer of dimers. Binds only one seryl-tRNA(Sec) per dimer. It depends on pyridoxal 5'-phosphate as a cofactor.

The protein localises to the cytoplasm. The enzyme catalyses L-seryl-tRNA(Sec) + selenophosphate + H(+) = L-selenocysteinyl-tRNA(Sec) + phosphate. Its pathway is aminoacyl-tRNA biosynthesis; selenocysteinyl-tRNA(Sec) biosynthesis; selenocysteinyl-tRNA(Sec) from L-seryl-tRNA(Sec) (bacterial route): step 1/1. Functionally, converts seryl-tRNA(Sec) to selenocysteinyl-tRNA(Sec) required for selenoprotein biosynthesis. This chain is L-seryl-tRNA(Sec) selenium transferase, found in Yersinia pestis bv. Antiqua (strain Antiqua).